The sequence spans 93 residues: Large ribosomal subunit protein uL23cz/uL23cy (93 aa).

This sequence belongs to the universal ribosomal protein uL23 family. In terms of assembly, part of the 50S ribosomal subunit.

The protein resides in the plastid. Its subcellular location is the chloroplast. Its function is as follows. Binds to 23S rRNA. This chain is Large ribosomal subunit protein uL23cz/uL23cy (rpl23-A), found in Platanus occidentalis (Sycamore).